We begin with the raw amino-acid sequence, 543 residues long: Chaperonin GroEL 4 (543 aa).

Residues 29–32 (TLGP), 86–90 (DGTTT), glycine 411, 476–478 (DAA), and aspartate 492 each bind ATP.

Belongs to the chaperonin (HSP60) family. Forms a cylinder of 14 subunits composed of two heptameric rings stacked back-to-back. Interacts with the co-chaperonin GroES.

It localises to the cytoplasm. It carries out the reaction ATP + H2O + a folded polypeptide = ADP + phosphate + an unfolded polypeptide.. In terms of biological role, together with its co-chaperonin GroES, plays an essential role in assisting protein folding. The GroEL-GroES system forms a nano-cage that allows encapsulation of the non-native substrate proteins and provides a physical environment optimized to promote and accelerate protein folding. The chain is Chaperonin GroEL 4 from Bradyrhizobium diazoefficiens (strain JCM 10833 / BCRC 13528 / IAM 13628 / NBRC 14792 / USDA 110).